We begin with the raw amino-acid sequence, 65 residues long: Large ribosomal subunit protein bL35 (65 aa).

Positions 1–28 (MPKMKTHRGAAKRFKKTGTGKIKRGQSK) are disordered.

This sequence belongs to the bacterial ribosomal protein bL35 family.

The protein is Large ribosomal subunit protein bL35 of Acidobacterium capsulatum (strain ATCC 51196 / DSM 11244 / BCRC 80197 / JCM 7670 / NBRC 15755 / NCIMB 13165 / 161).